Reading from the N-terminus, the 276-residue chain is Putative pyruvate, phosphate dikinase regulatory protein (276 aa).

Residue 151 to 158 (GISRTSKT) participates in ADP binding.

It belongs to the pyruvate, phosphate/water dikinase regulatory protein family. PDRP subfamily.

It catalyses the reaction N(tele)-phospho-L-histidyl/L-threonyl-[pyruvate, phosphate dikinase] + ADP = N(tele)-phospho-L-histidyl/O-phospho-L-threonyl-[pyruvate, phosphate dikinase] + AMP + H(+). The enzyme catalyses N(tele)-phospho-L-histidyl/O-phospho-L-threonyl-[pyruvate, phosphate dikinase] + phosphate + H(+) = N(tele)-phospho-L-histidyl/L-threonyl-[pyruvate, phosphate dikinase] + diphosphate. Bifunctional serine/threonine kinase and phosphorylase involved in the regulation of the pyruvate, phosphate dikinase (PPDK) by catalyzing its phosphorylation/dephosphorylation. This is Putative pyruvate, phosphate dikinase regulatory protein from Streptococcus agalactiae serotype Ia (strain ATCC 27591 / A909 / CDC SS700).